Consider the following 133-residue polypeptide: Large ribosomal subunit protein bL17 (133 aa).

This sequence belongs to the bacterial ribosomal protein bL17 family. As to quaternary structure, part of the 50S ribosomal subunit. Contacts protein L32.

The protein is Large ribosomal subunit protein bL17 of Verminephrobacter eiseniae (strain EF01-2).